Here is a 1150-residue protein sequence, read N- to C-terminus: ATP-dependent helicase/deoxyribonuclease subunit B (1150 aa).

An ATP-binding site is contributed by 8-15; that stretch reads GRSGSGKS. [4Fe-4S] cluster contacts are provided by cysteine 789, cysteine 1108, cysteine 1111, and cysteine 1117.

It belongs to the helicase family. AddB/RexB type 1 subfamily. Heterodimer of AddA and AddB. Mg(2+) serves as cofactor. Requires [4Fe-4S] cluster as cofactor.

In terms of biological role, the heterodimer acts as both an ATP-dependent DNA helicase and an ATP-dependent, dual-direction single-stranded exonuclease. Recognizes the chi site generating a DNA molecule suitable for the initiation of homologous recombination. The AddB subunit has 5' -&gt; 3' nuclease activity but not helicase activity. The polypeptide is ATP-dependent helicase/deoxyribonuclease subunit B (Clostridium tetani (strain Massachusetts / E88)).